The chain runs to 148 residues: Endoribonuclease YbeY (148 aa).

Residues H105, H109, and D115 each coordinate Zn(2+).

Belongs to the endoribonuclease YbeY family. The cofactor is Zn(2+).

Its subcellular location is the cytoplasm. Single strand-specific metallo-endoribonuclease involved in late-stage 70S ribosome quality control and in maturation of the 3' terminus of the 16S rRNA. This Chlorobium phaeovibrioides (strain DSM 265 / 1930) (Prosthecochloris vibrioformis (strain DSM 265)) protein is Endoribonuclease YbeY.